A 554-amino-acid polypeptide reads, in one-letter code: (E)-beta-caryophyllene synthase (554 aa).

Mn(2+)-binding residues include D313 and D317. A DDXXD motif motif is present at residues 313 to 317; the sequence is DDIYD. 2 homodimerization regions span residues 319 to 325 and 391 to 427; these read YGTLDEL and EAQWFFSKYKPTMQEYMKVALLSSGYMMMTINSLAVI. 2 residues coordinate Mn(2+): D457 and E465.

The protein belongs to the terpene synthase family. Homodimer. It depends on Mn(2+) as a cofactor. The cofactor is Mg(2+). As to expression, expressed in peltate glandular trichomes. Present at low levels in flowers, leaves and stems.

The enzyme catalyses (2E,6E)-farnesyl diphosphate = (-)-(E)-beta-caryophyllene + diphosphate. It carries out the reaction (2E,6E)-farnesyl diphosphate = alpha-humulene + diphosphate. It participates in secondary metabolite biosynthesis; terpenoid biosynthesis. In terms of biological role, involved in the biosynthesis of phenolic sesquiterpenes natural products. Sesquiterpene synthase converting (2E,6E)-farnesyl diphosphate (FPP) to (E)-beta-caryophyllene and alpha-humulene. The polypeptide is (E)-beta-caryophyllene synthase (Origanum vulgare (Wild marjoram)).